The primary structure comprises 189 residues: ATP-dependent protease subunit HslV (189 aa).

Thr12 is a catalytic residue. 3 residues coordinate Na(+): Ala172, Cys175, and Thr178.

It belongs to the peptidase T1B family. HslV subfamily. In terms of assembly, a double ring-shaped homohexamer of HslV is capped on each side by a ring-shaped HslU homohexamer. The assembly of the HslU/HslV complex is dependent on binding of ATP.

Its subcellular location is the cytoplasm. It catalyses the reaction ATP-dependent cleavage of peptide bonds with broad specificity.. With respect to regulation, allosterically activated by HslU binding. Its function is as follows. Protease subunit of a proteasome-like degradation complex believed to be a general protein degrading machinery. The polypeptide is ATP-dependent protease subunit HslV (Ehrlichia ruminantium (strain Welgevonden)).